Consider the following 356-residue polypeptide: Ferredoxin--NADP reductase (356 aa).

FAD is bound by residues threonine 25, glutamate 44, glutamine 52, tyrosine 57, valine 97, phenylalanine 132, aspartate 298, and serine 339.

This sequence belongs to the ferredoxin--NADP reductase type 2 family. Homodimer. Requires FAD as cofactor.

The enzyme catalyses 2 reduced [2Fe-2S]-[ferredoxin] + NADP(+) + H(+) = 2 oxidized [2Fe-2S]-[ferredoxin] + NADPH. The protein is Ferredoxin--NADP reductase of Chlorobaculum parvum (strain DSM 263 / NCIMB 8327) (Chlorobium vibrioforme subsp. thiosulfatophilum).